The primary structure comprises 188 residues: Phosphoribosylglycinamide formyltransferase (188 aa).

A N(1)-(5-phospho-beta-D-ribosyl)glycinamide-binding site is contributed by glycine 12–asparagine 14. Residues lysine 66, methionine 91 to isoleucine 94, and asparagine 108 each bind (6R)-10-formyltetrahydrofolate. The Proton donor role is filled by histidine 110.

The protein belongs to the GART family.

The catalysed reaction is N(1)-(5-phospho-beta-D-ribosyl)glycinamide + (6R)-10-formyltetrahydrofolate = N(2)-formyl-N(1)-(5-phospho-beta-D-ribosyl)glycinamide + (6S)-5,6,7,8-tetrahydrofolate + H(+). The protein operates within purine metabolism; IMP biosynthesis via de novo pathway; N(2)-formyl-N(1)-(5-phospho-D-ribosyl)glycinamide from N(1)-(5-phospho-D-ribosyl)glycinamide (10-formyl THF route): step 1/1. In terms of biological role, catalyzes the transfer of a formyl group from 10-formyltetrahydrofolate to 5-phospho-ribosyl-glycinamide (GAR), producing 5-phospho-ribosyl-N-formylglycinamide (FGAR) and tetrahydrofolate. The chain is Phosphoribosylglycinamide formyltransferase from Staphylococcus aureus (strain MSSA476).